The sequence spans 214 residues: Uridine kinase (214 aa).

ATP is bound at residue 15-22 (GASASGKS).

The protein belongs to the uridine kinase family.

It is found in the cytoplasm. The catalysed reaction is uridine + ATP = UMP + ADP + H(+). It catalyses the reaction cytidine + ATP = CMP + ADP + H(+). It functions in the pathway pyrimidine metabolism; CTP biosynthesis via salvage pathway; CTP from cytidine: step 1/3. It participates in pyrimidine metabolism; UMP biosynthesis via salvage pathway; UMP from uridine: step 1/1. This Aeromonas hydrophila subsp. hydrophila (strain ATCC 7966 / DSM 30187 / BCRC 13018 / CCUG 14551 / JCM 1027 / KCTC 2358 / NCIMB 9240 / NCTC 8049) protein is Uridine kinase.